Here is a 198-residue protein sequence, read N- to C-terminus: HTH-type transcriptional regulator BetI (198 aa).

Residues 8-68 (PLRRRELIDA…ATMRHLLREL (61 aa)) enclose the HTH tetR-type domain. Positions 31–50 (TVAQIAHEAGVSPALAHHYF) form a DNA-binding region, H-T-H motif.

It functions in the pathway amine and polyamine biosynthesis; betaine biosynthesis via choline pathway [regulation]. In terms of biological role, repressor involved in the biosynthesis of the osmoprotectant glycine betaine. It represses transcription of the choline transporter BetT and the genes of BetAB involved in the synthesis of glycine betaine. The chain is HTH-type transcriptional regulator BetI from Brucella suis (strain ATCC 23445 / NCTC 10510).